A 726-amino-acid chain; its full sequence is PTS system glucose-specific EIICBA component (726 aa).

The 453-residue stretch at 1–453 (MMKDTFKNVL…FNYATPGRNG (453 aa)) folds into the PTS EIIC type-1 domain. 9 helical membrane passes run 18–38 (FGKA…MISI), 62–82 (IGWG…GGSW), 90–110 (AFAA…IFGV), 139–159 (VLEA…GFVG), 184–204 (FVPF…AAFW), 311–331 (FKVG…VAIY), 344–364 (GMMI…PIEY), 365–385 (MFMF…GAAF), and 419–439 (IVNF…IANF). Residues 473–555 (GSQAVNIINL…QDILDSGEII (83 aa)) enclose the PTS EIIB type-1 domain. Residue C495 is the Phosphocysteine intermediate; for EIIB activity of the active site. A PTS EIIA type-1 domain is found at 596 to 700 (DPVFAQKMMG…ETSTVVVFTN (105 aa)). The Tele-phosphohistidine intermediate; for EIIA activity role is filled by H648.

The protein resides in the cell membrane. The catalysed reaction is N(pros)-phospho-L-histidyl-[protein] + D-glucose(out) = D-glucose 6-phosphate(in) + L-histidyl-[protein]. Its function is as follows. The phosphoenolpyruvate-dependent sugar phosphotransferase system (sugar PTS), a major carbohydrate active transport system, catalyzes the phosphorylation of incoming sugar substrates concomitantly with their translocation across the cell membrane. This system is involved in glucose transport. The sequence is that of PTS system glucose-specific EIICBA component (exp5) from Streptococcus pneumoniae serotype 4 (strain ATCC BAA-334 / TIGR4).